A 1204-amino-acid polypeptide reads, in one-letter code: TPR repeat-containing protein DDB_G0287999 (1204 aa).

The span at 32 to 48 (TTDTTTTTSTSTTTDTD) shows a compositional bias: low complexity. The interval 32 to 55 (TTDTTTTTSTSTTTDTDTNSEKSN) is disordered. TPR repeat units lie at residues 263–296 (SKGL…YKDL), 379–412 (NDSN…DQLY), and 583–617 (IQHF…GSVT). Residues 360–387 (QPPPQEQQLMDDDSNSNSNNDSNNIIKN) are disordered. A compositionally biased stretch (low complexity) spans 374-387 (NSNSNNDSNNIIKN). Disordered stretches follow at residues 639 to 660 (NNNN…NNNN) and 761 to 797 (DDND…KTTT). Residues 766-778 (DNNNNNNNNNNNN) are compositionally biased toward low complexity.

This chain is TPR repeat-containing protein DDB_G0287999, found in Dictyostelium discoideum (Social amoeba).